The sequence spans 446 residues: Deoxyguanosinetriphosphate triphosphohydrolase-like protein (446 aa).

Residues 1-28 (MSSSVWQERRHGEDKQRRNDHRSPFQRD) are disordered. The segment covering 7 to 28 (QERRHGEDKQRRNDHRSPFQRD) has biased composition (basic and acidic residues). In terms of domain architecture, HD spans 59 to 252 (RLTHSLEVSQ…MELADDIAYA (194 aa)).

The protein belongs to the dGTPase family. Type 2 subfamily.

This chain is Deoxyguanosinetriphosphate triphosphohydrolase-like protein, found in Shewanella sp. (strain MR-4).